A 235-amino-acid chain; its full sequence is SMN complex subunit yip11/gem2 (235 aa).

The interval 1-34 is disordered; the sequence is MPSKRKRNPLQYQTSGSLDEETNQRSAFPQIDNN. Positions 24–34 are enriched in polar residues; sequence QRSAFPQIDNN. Phosphoserine occurs at positions 117 and 118.

It belongs to the gemin-2 family. As to quaternary structure, part of the core SMN complex at least composed of smn1, yip11/gem2, gem6, gem7 and gem8. Interacts with smn1; the interaction is direct.

Its subcellular location is the nucleus. Its function is as follows. The SMN complex catalyzes the assembly of small nuclear ribonucleoproteins (snRNPs), the building blocks of the spliceosome, and thereby plays an important role in the splicing of cellular pre-mRNAs. Most spliceosomal snRNPs contain a common set of Sm proteins smb1, smd1, smd2, smd3, sme1, smf1 and smg1 that assemble in a heptameric protein ring on the Sm site of the small nuclear RNA to form the core snRNP. In the cytosol, the Sm proteins smd1, smd2, sme1, smf1 and smg1 (5Sm) are trapped in an inactive 6S pICln-Sm complex by the chaperone saf5. To complete assembly of core snRNPs, the SMN complex accepts 5Sm from saf5. Binding of snRNA inside 5Sm ultimately triggers eviction of the SMN complex, thereby allowing binding of smd3 and smb1 to complete assembly of the core snRNP. Within the SMN complex, yip11/gem2 constrains the conformation of 5Sm, thereby promoting 5Sm binding to snRNA containing the snRNP code (a nonameric Sm site and a 3'-adjacent stem-loop), thus preventing progression of assembly until a cognate substrate is bound. This Schizosaccharomyces pombe (strain 972 / ATCC 24843) (Fission yeast) protein is SMN complex subunit yip11/gem2 (yip11).